The following is a 267-amino-acid chain: L-aspartate dehydrogenase (267 aa).

NAD(+) contacts are provided by A124 and N190. Residue H220 is part of the active site.

The protein belongs to the L-aspartate dehydrogenase family.

It catalyses the reaction L-aspartate + NADP(+) + H2O = oxaloacetate + NH4(+) + NADPH + H(+). The catalysed reaction is L-aspartate + NAD(+) + H2O = oxaloacetate + NH4(+) + NADH + H(+). It participates in cofactor biosynthesis; NAD(+) biosynthesis; iminoaspartate from L-aspartate (dehydrogenase route): step 1/1. Specifically catalyzes the NAD or NADP-dependent dehydrogenation of L-aspartate to iminoaspartate. This chain is L-aspartate dehydrogenase, found in Ralstonia pickettii (strain 12J).